A 536-amino-acid polypeptide reads, in one-letter code: CTP synthase (536 aa).

Residues 1–267 form an amidoligase domain region; the sequence is MSKFVFVTGG…CKQTLNCLEL (267 aa). Ser13 provides a ligand contact to CTP. Ser13 lines the UTP pocket. Residues 14 to 19 and Asp71 each bind ATP; that span reads SIGKGI. Mg(2+)-binding residues include Asp71 and Glu141. CTP-binding positions include 148-150, 188-193, and Lys224; these read DIE and KTKPTQ. Residues 188 to 193 and Lys224 each bind UTP; that span reads KTKPTQ. The Glutamine amidotransferase type-1 domain maps to 292–534; it reads KVALVGKYIE…IKASQEKLEQ (243 aa). Gly354 serves as a coordination point for L-glutamine. Cys381 (nucleophile; for glutamine hydrolysis) is an active-site residue. Residues 382–385, Glu405, and Arg462 contribute to the L-glutamine site; that span reads LGMQ. Catalysis depends on residues His507 and Glu509.

The protein belongs to the CTP synthase family. As to quaternary structure, homotetramer.

It catalyses the reaction UTP + L-glutamine + ATP + H2O = CTP + L-glutamate + ADP + phosphate + 2 H(+). The enzyme catalyses L-glutamine + H2O = L-glutamate + NH4(+). The catalysed reaction is UTP + NH4(+) + ATP = CTP + ADP + phosphate + 2 H(+). It participates in pyrimidine metabolism; CTP biosynthesis via de novo pathway; CTP from UDP: step 2/2. Its activity is regulated as follows. Allosterically activated by GTP, when glutamine is the substrate; GTP has no effect on the reaction when ammonia is the substrate. The allosteric effector GTP functions by stabilizing the protein conformation that binds the tetrahedral intermediate(s) formed during glutamine hydrolysis. Inhibited by the product CTP, via allosteric rather than competitive inhibition. Functionally, catalyzes the ATP-dependent amination of UTP to CTP with either L-glutamine or ammonia as the source of nitrogen. Regulates intracellular CTP levels through interactions with the four ribonucleotide triphosphates. The polypeptide is CTP synthase (Prochlorococcus marinus subsp. pastoris (strain CCMP1986 / NIES-2087 / MED4)).